The following is a 198-amino-acid chain: Sorcin (198 aa).

EF-hand domains follow at residues 45-64 (QDGQIDADELQRCLTQSGIA), 70-98 (FNLETCRLMVSMLDRDMSGTMGFNEFKEL), 100-135 (AVLNGWRQHFISFDSDRSGTVDPQELQKALTTMGFR), and 151-169 (SGKITFDDYIACCVKLRAL). Asp83, Asp85, Ser87, Thr89, Glu94, Asp113, Asp115, Ser117, Thr119, and Glu124 together coordinate Ca(2+). Ser178 is subject to Phosphoserine.

As to quaternary structure, homodimer. Interacts with GCA, RYR2 and ANXA7. Detected in cardiac myocytes.

Its subcellular location is the cytoplasm. It is found in the sarcoplasmic reticulum membrane. Functionally, calcium-binding protein that modulates excitation-contraction coupling in the heart. Contributes to calcium homeostasis in the heart sarcoplasmic reticulum. Modulates the activity of RYR2 calcium channels. The polypeptide is Sorcin (Sri) (Mus musculus (Mouse)).